The sequence spans 542 residues: Chaperonin GroEL 2 (542 aa).

Residues 30–33 (TLGP), K51, 87–91 (DGTTT), G415, and D496 each bind ATP. The segment at 523–542 (AEKPKKDGQPQMPPAPGMDF) is disordered. A compositionally biased stretch (pro residues) spans 533 to 542 (QMPPAPGMDF).

The protein belongs to the chaperonin (HSP60) family. In terms of assembly, forms a cylinder of 14 subunits composed of two heptameric rings stacked back-to-back. Interacts with the co-chaperonin GroES.

The protein localises to the cytoplasm. It carries out the reaction ATP + H2O + a folded polypeptide = ADP + phosphate + an unfolded polypeptide.. Functionally, together with its co-chaperonin GroES, plays an essential role in assisting protein folding. The GroEL-GroES system forms a nano-cage that allows encapsulation of the non-native substrate proteins and provides a physical environment optimized to promote and accelerate protein folding. The protein is Chaperonin GroEL 2 of Sinorhizobium medicae (strain WSM419) (Ensifer medicae).